Consider the following 495-residue polypeptide: Cornulin (495 aa).

Positions H49–A84 constitute an EF-hand domain. Ca(2+)-binding residues include D62, D64, T66, T68, and E73. Disordered stretches follow at residues A96–G439 and L460–I481. The segment covering S99–S110 has biased composition (polar residues). Residues H137–G151 are compositionally biased toward low complexity. The span at V152–K194 shows a compositional bias: polar residues. Residues G196–Q222 show a composition bias toward basic and acidic residues. The span at T226–V242 shows a compositional bias: low complexity. Composition is skewed to polar residues over residues E243–V282 and Q290–E303. A compositionally biased stretch (low complexity) spans S307 to Q324. Positions G334 to T355 are enriched in polar residues. A compositionally biased stretch (low complexity) spans Q374–Q385. Composition is skewed to polar residues over residues Q403–T420 and L460–A473.

The protein belongs to the S100-fused protein family. As to quaternary structure, homodimer. In terms of tissue distribution, expressed in the basal skin layer (at protein level). Squamous epithelia cell-specific. Expressed in the esophagus (periphery of the cells of the granular and the upper spinous layers), foreskin (granular and lower cornified cells), scalp skin (granular layer), inner root sheath of the hair follicle and in primary keratinocytes (at protein level). Expressed in the squamous epithelium of the cervix, esophagus, foreskin and larynx. Expressed in the fetal bladder and scalp skin. Expressed at very low levels in the lung, kidney, uterus, skeletal muscle, heart and fetal brain. Undetectable or barely detectable in esophageal and oral squamous cell carcinoma compared with the matched adjacent normal esophageal mucosa. Undetectable or barely detectable in larynx and esophagus from patients with pH-documented laryngopharyngeal reflux (LPR).

It is found in the cytoplasm. Its function is as follows. Promotes cell proliferation, G1/S cell cycle progression and induces expression of the cell cycle regulator CCND1. Regulates proliferation induced by pro-inflammatory cytokine response via activation of NFKB1 and PI3K/AKT signaling pathways. This chain is Cornulin (CRNN), found in Homo sapiens (Human).